A 260-amino-acid chain; its full sequence is Ubiquinone/menaquinone biosynthesis C-methyltransferase UbiE (260 aa).

Residues threonine 83, aspartate 104, and asparagine 132–alanine 133 each bind S-adenosyl-L-methionine.

The protein belongs to the class I-like SAM-binding methyltransferase superfamily. MenG/UbiE family.

The enzyme catalyses a 2-demethylmenaquinol + S-adenosyl-L-methionine = a menaquinol + S-adenosyl-L-homocysteine + H(+). It catalyses the reaction a 2-methoxy-6-(all-trans-polyprenyl)benzene-1,4-diol + S-adenosyl-L-methionine = a 5-methoxy-2-methyl-3-(all-trans-polyprenyl)benzene-1,4-diol + S-adenosyl-L-homocysteine + H(+). It participates in quinol/quinone metabolism; menaquinone biosynthesis; menaquinol from 1,4-dihydroxy-2-naphthoate: step 2/2. Its pathway is cofactor biosynthesis; ubiquinone biosynthesis. Functionally, methyltransferase required for the conversion of demethylmenaquinol (DMKH2) to menaquinol (MKH2) and the conversion of 2-polyprenyl-6-methoxy-1,4-benzoquinol (DDMQH2) to 2-polyprenyl-3-methyl-6-methoxy-1,4-benzoquinol (DMQH2). The protein is Ubiquinone/menaquinone biosynthesis C-methyltransferase UbiE of Bartonella henselae (strain ATCC 49882 / DSM 28221 / CCUG 30454 / Houston 1) (Rochalimaea henselae).